The following is a 252-amino-acid chain: Ribosomal RNA small subunit methyltransferase J (252 aa).

S-adenosyl-L-methionine-binding positions include 101-102 (RD), 117-118 (ER), 153-154 (SS), and aspartate 171.

This sequence belongs to the methyltransferase superfamily. RsmJ family.

It is found in the cytoplasm. The enzyme catalyses guanosine(1516) in 16S rRNA + S-adenosyl-L-methionine = N(2)-methylguanosine(1516) in 16S rRNA + S-adenosyl-L-homocysteine + H(+). In terms of biological role, specifically methylates the guanosine in position 1516 of 16S rRNA. The sequence is that of Ribosomal RNA small subunit methyltransferase J from Salmonella typhi.